The chain runs to 743 residues: Isocitrate dehydrogenase [NADP] 2 (743 aa).

NADP(+) is bound by residues asparagine 87 and serine 89. D-threo-isocitrate contacts are provided by serine 134, asparagine 137, arginine 141, arginine 147, and lysine 257. Asparagine 137 is an NADP(+) binding site. Aspartate 352 is a Mg(2+) binding site. D-threo-isocitrate contacts are provided by tyrosine 422 and arginine 549. Aspartate 550 and aspartate 554 together coordinate Mg(2+). Residues serine 587, histidine 591, arginine 602, aspartate 604, and arginine 651 each coordinate NADP(+).

Belongs to the monomeric-type IDH family. Monomer. It depends on Mg(2+) as a cofactor. Mn(2+) is required as a cofactor.

The enzyme catalyses D-threo-isocitrate + NADP(+) = 2-oxoglutarate + CO2 + NADPH. Catalyzes the oxidative decarboxylation of isocitrate to 2-oxoglutarate and carbon dioxide with the concomitant reduction of NADP(+). The protein is Isocitrate dehydrogenase [NADP] 2 (icd2) of Colwellia maris.